We begin with the raw amino-acid sequence, 148 residues long: Aspartate carbamoyltransferase regulatory chain (148 aa).

C106, C111, C134, and C137 together coordinate Zn(2+).

The protein belongs to the PyrI family. Contains catalytic and regulatory chains. Zn(2+) serves as cofactor.

Its function is as follows. Involved in allosteric regulation of aspartate carbamoyltransferase. The polypeptide is Aspartate carbamoyltransferase regulatory chain (Methanococcus vannielii (strain ATCC 35089 / DSM 1224 / JCM 13029 / OCM 148 / SB)).